The chain runs to 604 residues: uncharacterized protein (604 aa).

Positions 45–329 constitute an ABC transmembrane type-1 domain; it reads LPLSFLTVLI…LGQVYNQLLM (285 aa). A run of 6 helical transmembrane segments spans residues 49–69, 82–102, 162–182, 184–204, 273–293, and 297–317; these read FLTVLIGTAVKLVIPILIGVY, LLIQLIFIISGLYVLNYAANV, VINLLTDLLLLAGVIIILFTL, PELTIAIMVTLPIMFFISTSL, LVEMTNAIGTAVLIWYGATLI, and TITIGVFVSFAFYLGMFWEPI. Positions 363-597 constitute an ABC transporter domain; the sequence is ISFEEVEFSY…GGIYAGLVKA (235 aa). 396–403 contacts ATP; it reads GHTGSGKT.

The protein belongs to the ABC transporter superfamily.

The protein localises to the cell membrane. This is an uncharacterized protein from Bacillus subtilis (strain 168).